A 172-amino-acid chain; its full sequence is S-ribosylhomocysteine lyase (172 aa).

Residues H54, H58, and C128 each coordinate Fe cation.

The protein belongs to the LuxS family. In terms of assembly, homodimer. Fe cation serves as cofactor.

It catalyses the reaction S-(5-deoxy-D-ribos-5-yl)-L-homocysteine = (S)-4,5-dihydroxypentane-2,3-dione + L-homocysteine. In terms of biological role, involved in the synthesis of autoinducer 2 (AI-2) which is secreted by bacteria and is used to communicate both the cell density and the metabolic potential of the environment. The regulation of gene expression in response to changes in cell density is called quorum sensing. Catalyzes the transformation of S-ribosylhomocysteine (RHC) to homocysteine (HC) and 4,5-dihydroxy-2,3-pentadione (DPD). This is S-ribosylhomocysteine lyase from Vibrio parahaemolyticus serotype O3:K6 (strain RIMD 2210633).